A 164-amino-acid chain; its full sequence is MTCQTYNLFVLSVIMIYYGHTASSLNLVQLQDDIDKLKADFNSSHSDVADGGPIIVEKLKNWTERNEKRIILSQIVSMYLEMLENTDKSKPHIKHISEELYTLKNNLPDGVKKVKDIMDLAKLQMNDLRIQRKAANELFSILQKLVDPPSSKRKRSHPQRRCNC.

An N-terminal signal peptide occupies residues 1-19; the sequence is MTCQTYNLFVLSVIMIYYG. N-linked (GlcNAc...) asparagine glycans are attached at residues asparagine 42 and asparagine 61.

This sequence belongs to the type II (or gamma) interferon family. Homodimer.

The protein localises to the secreted. Its function is as follows. Produced by lymphocytes activated by specific antigens or mitogens. IFN-gamma, in addition to having antiviral activity, has important immunoregulatory functions. It is a potent activator of macrophages, it has antiproliferative effects on transformed cells and it can potentiate the antiviral and antitumor effects of the type I interferons. The protein is Interferon gamma (IFNG) of Meleagris gallopavo (Wild turkey).